Reading from the N-terminus, the 272-residue chain is 3-methyl-2-oxobutanoate hydroxymethyltransferase (272 aa).

Residues Asp-54 and Asp-93 each contribute to the Mg(2+) site. Residues 54-55 (DS), Asp-93, and Lys-123 contribute to the 3-methyl-2-oxobutanoate site. Glu-125 contributes to the Mg(2+) binding site. The Proton acceptor role is filled by Glu-190.

The protein belongs to the PanB family. Homodecamer; pentamer of dimers. The cofactor is Mg(2+).

Its subcellular location is the cytoplasm. It catalyses the reaction 3-methyl-2-oxobutanoate + (6R)-5,10-methylene-5,6,7,8-tetrahydrofolate + H2O = 2-dehydropantoate + (6S)-5,6,7,8-tetrahydrofolate. It participates in cofactor biosynthesis; (R)-pantothenate biosynthesis; (R)-pantoate from 3-methyl-2-oxobutanoate: step 1/2. Functionally, catalyzes the reversible reaction in which hydroxymethyl group from 5,10-methylenetetrahydrofolate is transferred onto alpha-ketoisovalerate to form ketopantoate. This Tropheryma whipplei (strain Twist) (Whipple's bacillus) protein is 3-methyl-2-oxobutanoate hydroxymethyltransferase.